A 165-amino-acid chain; its full sequence is Nucleotide-binding protein SYNW1816 (165 aa).

The protein belongs to the YajQ family.

Nucleotide-binding protein. The protein is Nucleotide-binding protein SYNW1816 of Parasynechococcus marenigrum (strain WH8102).